The primary structure comprises 574 residues: Proline--tRNA ligase (574 aa).

This sequence belongs to the class-II aminoacyl-tRNA synthetase family. ProS type 1 subfamily. In terms of assembly, homodimer.

The protein resides in the cytoplasm. It catalyses the reaction tRNA(Pro) + L-proline + ATP = L-prolyl-tRNA(Pro) + AMP + diphosphate. Functionally, catalyzes the attachment of proline to tRNA(Pro) in a two-step reaction: proline is first activated by ATP to form Pro-AMP and then transferred to the acceptor end of tRNA(Pro). As ProRS can inadvertently accommodate and process non-cognate amino acids such as alanine and cysteine, to avoid such errors it has two additional distinct editing activities against alanine. One activity is designated as 'pretransfer' editing and involves the tRNA(Pro)-independent hydrolysis of activated Ala-AMP. The other activity is designated 'posttransfer' editing and involves deacylation of mischarged Ala-tRNA(Pro). The misacylated Cys-tRNA(Pro) is not edited by ProRS. The sequence is that of Proline--tRNA ligase from Nitratidesulfovibrio vulgaris (strain ATCC 29579 / DSM 644 / CCUG 34227 / NCIMB 8303 / VKM B-1760 / Hildenborough) (Desulfovibrio vulgaris).